The following is a 613-amino-acid chain: Glutamyl-tRNA(Gln) amidotransferase subunit E (613 aa).

The protein belongs to the GatB/GatE family. GatE subfamily. As to quaternary structure, heterodimer of GatD and GatE.

It catalyses the reaction L-glutamyl-tRNA(Gln) + L-glutamine + ATP + H2O = L-glutaminyl-tRNA(Gln) + L-glutamate + ADP + phosphate + H(+). Allows the formation of correctly charged Gln-tRNA(Gln) through the transamidation of misacylated Glu-tRNA(Gln) in organisms which lack glutaminyl-tRNA synthetase. The reaction takes place in the presence of glutamine and ATP through an activated gamma-phospho-Glu-tRNA(Gln). The GatDE system is specific for glutamate and does not act on aspartate. This Archaeoglobus fulgidus (strain ATCC 49558 / DSM 4304 / JCM 9628 / NBRC 100126 / VC-16) protein is Glutamyl-tRNA(Gln) amidotransferase subunit E.